The following is a 430-amino-acid chain: Tyrosine--tRNA ligase (430 aa).

An L-tyrosine-binding site is contributed by Tyr-32. A 'HIGH' region motif is present at residues 37–46; the sequence is PTADSLHIGH. L-tyrosine is bound by residues Tyr-172 and Gln-176. Residues 232-236 carry the 'KMSKS' region motif; the sequence is KFGKT. ATP is bound at residue Lys-235. An S4 RNA-binding domain is found at 362–429; it reads IKAVDLCTEK…GKKNYYLLIA (68 aa).

This sequence belongs to the class-I aminoacyl-tRNA synthetase family. TyrS type 1 subfamily. As to quaternary structure, homodimer.

It localises to the cytoplasm. It carries out the reaction tRNA(Tyr) + L-tyrosine + ATP = L-tyrosyl-tRNA(Tyr) + AMP + diphosphate + H(+). Functionally, catalyzes the attachment of tyrosine to tRNA(Tyr) in a two-step reaction: tyrosine is first activated by ATP to form Tyr-AMP and then transferred to the acceptor end of tRNA(Tyr). In Parabacteroides distasonis (strain ATCC 8503 / DSM 20701 / CIP 104284 / JCM 5825 / NCTC 11152), this protein is Tyrosine--tRNA ligase.